The chain runs to 200 residues: HTH-type transcriptional regulator BetI (200 aa).

Residues 8-68 (DIRKPQLVQA…ETMREILRQL (61 aa)) enclose the HTH tetR-type domain. Positions 31–50 (SIALISKEAGVSTGIINHYF) form a DNA-binding region, H-T-H motif.

The protein operates within amine and polyamine biosynthesis; betaine biosynthesis via choline pathway [regulation]. In terms of biological role, repressor involved in the biosynthesis of the osmoprotectant glycine betaine. It represses transcription of the choline transporter BetT and the genes of BetAB involved in the synthesis of glycine betaine. In Vibrio atlanticus (strain LGP32) (Vibrio splendidus (strain Mel32)), this protein is HTH-type transcriptional regulator BetI.